The chain runs to 415 residues: Serine--tRNA ligase (415 aa).

Thr-231–Glu-233 serves as a coordination point for L-serine. Residue Arg-262–Glu-264 participates in ATP binding. Glu-285 provides a ligand contact to L-serine. Residue Glu-349–Ser-352 coordinates ATP. Ser-383 contributes to the L-serine binding site.

Belongs to the class-II aminoacyl-tRNA synthetase family. Type-1 seryl-tRNA synthetase subfamily. In terms of assembly, homodimer. The tRNA molecule binds across the dimer.

It localises to the cytoplasm. It carries out the reaction tRNA(Ser) + L-serine + ATP = L-seryl-tRNA(Ser) + AMP + diphosphate + H(+). The catalysed reaction is tRNA(Sec) + L-serine + ATP = L-seryl-tRNA(Sec) + AMP + diphosphate + H(+). It functions in the pathway aminoacyl-tRNA biosynthesis; selenocysteinyl-tRNA(Sec) biosynthesis; L-seryl-tRNA(Sec) from L-serine and tRNA(Sec): step 1/1. In terms of biological role, catalyzes the attachment of serine to tRNA(Ser). Is also able to aminoacylate tRNA(Sec) with serine, to form the misacylated tRNA L-seryl-tRNA(Sec), which will be further converted into selenocysteinyl-tRNA(Sec). The sequence is that of Serine--tRNA ligase from Helicobacter pylori (strain G27).